A 251-amino-acid polypeptide reads, in one-letter code: Lactose phosphotransferase system repressor (251 aa).

Residues 3–58 enclose the HTH deoR-type domain; it reads KHERLDEIAKLVNKKGTIRTNEIVEGLNVSDMTVRRDLIELENKGILTKIHGGARS. Residues 20-39 constitute a DNA-binding region (H-T-H motif); that stretch reads IRTNEIVEGLNVSDMTVRRD.

Functionally, repressor of the lactose catabolism operon. Galactose-6-phosphate is the inducer. This chain is Lactose phosphotransferase system repressor (lacR), found in Staphylococcus aureus (strain N315).